The primary structure comprises 1755 residues: Transposon Ty1-OR Gag-Pol polyprotein (1755 aa).

3 stretches are compositionally biased toward polar residues: residues 1–10 (MESQQLSNYP), 48–60 (TKAN…TPAS), and 127–152 (QSQF…GNTF). Disordered regions lie at residues 1-93 (MESQ…MMTQ), 126-173 (PQSQ…RPPP), and 352-421 (GSRN…SKST). The segment covering 153 to 165 (TDSSSADSDMTST) has biased composition (low complexity). Positions 299-401 (NNGIHINNKV…NSKSKTARAH (103 aa)) are RNA-binding. Residues 402 to 418 (NVSTSNNSPSTDNDSIS) are compositionally biased toward low complexity. A Phosphoserine modification is found at serine 416. The active-site For protease activity; shared with dimeric partner is aspartate 461. Residues 583 to 640 (NVHTSESTRKYPYPFIHRMLAHANAQTIRYSLKNNTITYFNESDVDWSSAIDYQCPDC) form an integrase-type zinc finger-like region. Positions 660–835 (NSYEPFQYLH…AGLDISTLLP (176 aa)) constitute an Integrase catalytic domain. Positions 671 and 736 each coordinate Mg(2+). Disordered stretches follow at residues 956 to 1087 (SKAV…ETEK), 1092 to 1111 (RSPS…NIVP), and 1130 to 1187 (DLPL…DNET). The segment covering 960-969 (SPTDSTPPST) has biased composition (low complexity). Over residues 1005–1015 (STPQISNIEST) the composition is skewed to polar residues. The span at 1038 to 1053 (ESSHASKSKDFRHSDS) shows a compositional bias: basic and acidic residues. 2 stretches are compositionally biased toward polar residues: residues 1054–1082 (YSEN…QISD) and 1101–1111 (PENNSSHNIVP). Positions 1178–1212 (KKRSLEDNETEIKVSRDTWNTKNMRSLEPPRSKKR) match the Bipartite nuclear localization signal motif. The Reverse transcriptase Ty1/copia-type domain maps to 1338-1476 (NNYYITQLDI…DILGLEIKYQ (139 aa)). Mg(2+) contacts are provided by aspartate 1346, aspartate 1427, aspartate 1428, aspartate 1610, glutamate 1652, and aspartate 1685. Positions 1610 to 1752 (DASYGNQPYY…IKTFKLLTNK (143 aa)) constitute an RNase H Ty1/copia-type domain.

The capsid protein forms a homotrimer, from which the VLPs are assembled. The protease is a homodimer, whose active site consists of two apposed aspartic acid residues. Initially, virus-like particles (VLPs) are composed of the structural unprocessed proteins Gag and Gag-Pol, and also contain the host initiator methionine tRNA (tRNA(i)-Met) which serves as a primer for minus-strand DNA synthesis, and a dimer of genomic Ty RNA. Processing of the polyproteins occurs within the particle and proceeds by an ordered pathway, called maturation. First, the protease (PR) is released by autocatalytic cleavage of the Gag-Pol polyprotein yielding capsid protein p45 and a Pol-p154 precursor protein. This cleavage is a prerequisite for subsequent processing of Pol-p154 at the remaining sites to release the mature structural and catalytic proteins. Maturation takes place prior to the RT reaction and is required to produce transposition-competent VLPs.

Its subcellular location is the cytoplasm. The protein resides in the nucleus. The enzyme catalyses DNA(n) + a 2'-deoxyribonucleoside 5'-triphosphate = DNA(n+1) + diphosphate. The catalysed reaction is Endonucleolytic cleavage to 5'-phosphomonoester.. Capsid protein (CA) is the structural component of the virus-like particle (VLP), forming the shell that encapsulates the retrotransposons dimeric RNA genome. The particles are assembled from trimer-clustered units and there are holes in the capsid shells that allow for the diffusion of macromolecules. CA also has nucleocapsid-like chaperone activity, promoting primer tRNA(i)-Met annealing to the multipartite primer-binding site (PBS), dimerization of Ty1 RNA and initiation of reverse transcription. Functionally, the aspartyl protease (PR) mediates the proteolytic cleavages of the Gag and Gag-Pol polyproteins after assembly of the VLP. Its function is as follows. Reverse transcriptase/ribonuclease H (RT) is a multifunctional enzyme that catalyzes the conversion of the retro-elements RNA genome into dsDNA within the VLP. The enzyme displays a DNA polymerase activity that can copy either DNA or RNA templates, and a ribonuclease H (RNase H) activity that cleaves the RNA strand of RNA-DNA heteroduplexes during plus-strand synthesis and hydrolyzes RNA primers. The conversion leads to a linear dsDNA copy of the retrotransposon that includes long terminal repeats (LTRs) at both ends. In terms of biological role, integrase (IN) targets the VLP to the nucleus, where a subparticle preintegration complex (PIC) containing at least integrase and the newly synthesized dsDNA copy of the retrotransposon must transit the nuclear membrane. Once in the nucleus, integrase performs the integration of the dsDNA into the host genome. The protein is Transposon Ty1-OR Gag-Pol polyprotein (TY1B-OR) of Saccharomyces cerevisiae (strain ATCC 204508 / S288c) (Baker's yeast).